The following is a 189-amino-acid chain: PTS system glucose-specific EIIA component (189 aa).

The PTS EIIA type-1 domain occupies 31-135 (DEAFAEKIVG…SVITPVVIAN (105 aa)). Residues His-68 and His-83 each coordinate Zn(2+). His-83 acts as the Tele-phosphohistidine intermediate; for EIIA activity in catalysis. Phosphohistidine; by HPr is present on His-83.

As to quaternary structure, heterodimer with glycerol kinase (glpk). Zn(2+) is required as a cofactor.

It localises to the cytoplasm. The phosphoenolpyruvate-dependent sugar phosphotransferase system (sugar PTS), a major carbohydrate active transport system, catalyzes the phosphorylation of incoming sugar substrates concomitantly with their translocation across the cell membrane. The enzyme II complex composed of PtsG and Crr is involved in glucose transport. This Borreliella burgdorferi (strain ATCC 35210 / DSM 4680 / CIP 102532 / B31) (Borrelia burgdorferi) protein is PTS system glucose-specific EIIA component (crr).